The primary structure comprises 349 residues: DNA replication and repair protein RecF (349 aa).

30-37 serves as a coordination point for ATP; it reads GKNGSGKT.

Belongs to the RecF family.

The protein resides in the cytoplasm. Functionally, the RecF protein is involved in DNA metabolism; it is required for DNA replication and normal SOS inducibility. RecF binds preferentially to single-stranded, linear DNA. It also seems to bind ATP. The chain is DNA replication and repair protein RecF from Francisella tularensis subsp. novicida (strain U112).